A 95-amino-acid polypeptide reads, in one-letter code: Small ribosomal subunit protein bS18 (95 aa).

The protein belongs to the bacterial ribosomal protein bS18 family. Part of the 30S ribosomal subunit. Forms a tight heterodimer with protein bS6.

Binds as a heterodimer with protein bS6 to the central domain of the 16S rRNA, where it helps stabilize the platform of the 30S subunit. The sequence is that of Small ribosomal subunit protein bS18 from Rickettsia peacockii (strain Rustic).